The following is a 405-amino-acid chain: Multidrug resistance protein MdtA (405 aa).

A signal peptide spans 1-22 (MKTPRRFPLIALTVAAVLTAAA). Positions 35-52 (VQNRQGTEQQRASNSQGS) are enriched in polar residues. A disordered region spans residues 35–62 (VQNRQGTEQQRASNSQGSAKRAGNAPPV).

It belongs to the membrane fusion protein (MFP) (TC 8.A.1) family. As to quaternary structure, part of a tripartite efflux system composed of MdtA, MdtB and MdtC.

The protein localises to the cell inner membrane. In Erwinia amylovora (strain ATCC 49946 / CCPPB 0273 / Ea273 / 27-3), this protein is Multidrug resistance protein MdtA.